The chain runs to 285 residues: Tropomyosin alpha-3 chain (285 aa).

Residues 1–285 are a coiled coil; that stretch reads MMEAIKKKMQ…DHALNDMTSI (285 aa). Methionine 2 bears the N-acetylmethionine mark. Methionine 2 is subject to N-acetylalanine. The segment covering 16–41 has biased composition (basic and acidic residues); that stretch reads KENALDRAEQAEAEQKQAEERSKQLE. The segment at 16-44 is disordered; sequence KENALDRAEQAEAEQKQAEERSKQLEDEL. Threonine 54 carries the phosphothreonine modification. Serine 62 and serine 88 each carry phosphoserine. Threonine 109 is modified (phosphothreonine). N6-acetyllysine is present on residues glutamate 125 and leucine 177. Residue serine 207 is modified to Phosphoserine. N6-acetyllysine is present on tyrosine 215. Serine 216 carries the post-translational modification Phosphoserine. Residue threonine 253 is modified to Phosphothreonine. Position 262 is a phosphotyrosine (tyrosine 262). Serine 272 carries the phosphoserine modification. Threonine 283 carries the phosphothreonine modification. Phosphoserine is present on serine 284.

This sequence belongs to the tropomyosin family. In terms of assembly, homodimer. Heterodimer of an alpha (TPM1, TPM3 or TPM4) and a beta (TPM2) chain. Interacts with TMOD1. Interacts with TNNT1.

The protein localises to the cytoplasm. It is found in the cytoskeleton. In terms of biological role, binds to actin filaments in muscle and non-muscle cells. Plays a central role, in association with the troponin complex, in the calcium dependent regulation of vertebrate striated muscle contraction. Smooth muscle contraction is regulated by interaction with caldesmon. In non-muscle cells is implicated in stabilizing cytoskeleton actin filaments. The polypeptide is Tropomyosin alpha-3 chain (TPM3) (Homo sapiens (Human)).